The following is a 59-amino-acid chain: UPF0391 membrane protein GbCGDNIH1_2123 (59 aa).

A run of 2 helical transmembrane segments spans residues 6-26 (LALF…TGIS) and 35-55 (ILFV…LAAG).

Belongs to the UPF0391 family.

It is found in the cell membrane. In Granulibacter bethesdensis (strain ATCC BAA-1260 / CGDNIH1), this protein is UPF0391 membrane protein GbCGDNIH1_2123.